Here is a 639-residue protein sequence, read N- to C-terminus: Chaperone protein DnaK (639 aa).

A Phosphothreonine; by autocatalysis modification is found at Thr-198. The segment at 601–639 (AQQAPGADSCGGDCGQQQEAGAKPKDEKVVDADFEEVKK) is disordered. Basic and acidic residues predominate over residues 622–639 (AKPKDEKVVDADFEEVKK).

It belongs to the heat shock protein 70 family.

Its function is as follows. Acts as a chaperone. The chain is Chaperone protein DnaK from Trichlorobacter lovleyi (strain ATCC BAA-1151 / DSM 17278 / SZ) (Geobacter lovleyi).